The following is a 144-amino-acid chain: UPF0102 protein BURPS668_3819 (144 aa).

Residues 1-28 are disordered; it reads MCHAREASLGTGEPEAAPRDNFPREAGS. The span at 16-28 shows a compositional bias: basic and acidic residues; the sequence is AAPRDNFPREAGS.

Belongs to the UPF0102 family.

In Burkholderia pseudomallei (strain 668), this protein is UPF0102 protein BURPS668_3819.